A 721-amino-acid polypeptide reads, in one-letter code: Phosphomethylpyrimidine synthase (721 aa).

Substrate is bound by residues Asn-256, Met-285, Tyr-314, His-350, 370–372 (SRG), 411–414 (DGMR), and Glu-450. Residue His-454 participates in Zn(2+) binding. A substrate-binding site is contributed by Tyr-477. His-518 provides a ligand contact to Zn(2+). Residues Cys-598, Cys-601, and Cys-606 each coordinate [4Fe-4S] cluster.

It belongs to the ThiC family. As to quaternary structure, homodimer. [4Fe-4S] cluster is required as a cofactor.

It catalyses the reaction 5-amino-1-(5-phospho-beta-D-ribosyl)imidazole + S-adenosyl-L-methionine = 4-amino-2-methyl-5-(phosphooxymethyl)pyrimidine + CO + 5'-deoxyadenosine + formate + L-methionine + 3 H(+). It functions in the pathway cofactor biosynthesis; thiamine diphosphate biosynthesis. In terms of biological role, catalyzes the synthesis of the hydroxymethylpyrimidine phosphate (HMP-P) moiety of thiamine from aminoimidazole ribotide (AIR) in a radical S-adenosyl-L-methionine (SAM)-dependent reaction. In Shewanella oneidensis (strain ATCC 700550 / JCM 31522 / CIP 106686 / LMG 19005 / NCIMB 14063 / MR-1), this protein is Phosphomethylpyrimidine synthase.